Here is a 317-residue protein sequence, read N- to C-terminus: Dehydrogenase/reductase SDR family member 12 (317 aa).

Positions 50 and 52 each coordinate NAD(+). S175 contributes to the substrate binding site. NAD(+) is bound by residues Y201, K205, and T234. Y201 functions as the Proton acceptor in the catalytic mechanism.

It belongs to the short-chain dehydrogenases/reductases (SDR) family.

Putative oxidoreductase. This Homo sapiens (Human) protein is Dehydrogenase/reductase SDR family member 12.